We begin with the raw amino-acid sequence, 168 residues long: Endoribonuclease YbeY (168 aa).

Zn(2+) is bound by residues His-123, His-127, and His-133.

It belongs to the endoribonuclease YbeY family. The cofactor is Zn(2+).

It is found in the cytoplasm. Single strand-specific metallo-endoribonuclease involved in late-stage 70S ribosome quality control and in maturation of the 3' terminus of the 16S rRNA. The protein is Endoribonuclease YbeY of Francisella tularensis subsp. holarctica (strain LVS).